The primary structure comprises 235 residues: Endonuclease V (235 aa).

Residues Asp47 and Asp117 each coordinate Mg(2+).

It belongs to the endonuclease V family. The cofactor is Mg(2+).

It localises to the cytoplasm. It carries out the reaction Endonucleolytic cleavage at apurinic or apyrimidinic sites to products with a 5'-phosphate.. In terms of biological role, DNA repair enzyme involved in the repair of deaminated bases. Selectively cleaves double-stranded DNA at the second phosphodiester bond 3' to a deoxyinosine leaving behind the intact lesion on the nicked DNA. This Protochlamydia amoebophila (strain UWE25) protein is Endonuclease V.